A 1714-amino-acid chain; its full sequence is Latrophilin Cirl (1714 aa).

Topologically, residues 1 to 765 (MSSIDISGRY…LFTMFDGNMR (765 aa)) are extracellular. Positions 26–115 (ACEGKKLTIE…KYLEAHYQCI (90 aa)) constitute an SUEL-type lectin domain. N-linked (GlcNAc...) asparagine glycosylation is present at Asn-143. A disordered region spans residues 183–302 (PPHTVTHSTP…GSPASGNNSV (120 aa)). Residues 186-198 (TVTHSTPSSSTVP) are compositionally biased toward low complexity. Polar residues predominate over residues 244 to 262 (PSSKLPSAGNATAPSNTRI). Asn-253 carries N-linked (GlcNAc...) asparagine glycosylation. Low complexity-rich tracts occupy residues 272–282 (DDGTLLTTKSS) and 290–301 (ASNGSPASGNNS). Asn-299, Asn-338, Asn-395, Asn-652, Asn-701, and Asn-728 each carry an N-linked (GlcNAc...) asparagine glycan. The interval 373–397 (YDEYDDDPSSTTPAPSGGDCLHNSS) is disordered. Positions 558-752 (RSVVQKVKNI…AILMDVVDEH (195 aa)) constitute a GAIN-B domain. Intrachain disulfides connect Cys-707–Cys-734 and Cys-722–Cys-736. Residues 707–752 (CVFWNYIDHAWSANGCSLESTNRTHSVCSCNHLTNFAILMDVVDEH) form a GPS region. Residues 766-786 (VFIYISIAICVVFIVIALLTL) form a helical membrane-spanning segment. Topologically, residues 787–799 (KLFNGVFVKSART) are cytoplasmic. A helical transmembrane segment spans residues 800–820 (TIYTSIYVCLLAIELLFLLGI). Over 821-826 (EQTETS) the chain is Extracellular. The chain crosses the membrane as a helical span at residues 827-847 (IFCGFITVFLHCAILSGAAWF). The Cytoplasmic portion of the chain corresponds to 848–873 (CYEAFHSYYTLTSDELLVEVDQTPKV). A helical membrane pass occupies residues 874–894 (NWYYLLSYGLSVSVVAISVAI). The Extracellular segment spans residues 895–911 (NPSTYTQNDYCVLMEAN). The chain crosses the membrane as a helical span at residues 912-932 (ILFYATFVAPVLIFFVAAIGY). Residues 933–966 (TFLSWIIMCRKSCTGLKTKEHTRLASVRFDIRCS) are Cytoplasmic-facing. A helical transmembrane segment spans residues 967 to 987 (FVFLLLLSAVWCSAYFYLRGA). At 988–994 (KTDEDTT) the chain is on the extracellular side. Residues 995-1015 (TIYGYCFICFNTLLGLYIFVF) traverse the membrane as a helical segment. Topologically, residues 1016 to 1714 (HCIQNEKIRR…VRCYLEPLAK (699 aa)) are cytoplasmic. Phosphoserine occurs at positions 1155, 1245, and 1252. Disordered stretches follow at residues 1229-1253 (PNSQHGKKKRGGAVPASPSGSLHSR), 1268-1287 (KTKQGQPSGYPHYAEALDPP), 1293-1354 (AFYQ…PPPH), 1447-1536 (GGGS…DERM), and 1551-1694 (FQRQ…QQRH). Over residues 1296–1315 (QQQQQMRRQQQQQQQQQQQQ) the composition is skewed to low complexity. Ser-1317 and Ser-1318 each carry phosphoserine. 2 stretches are compositionally biased toward low complexity: residues 1330 to 1348 (LHLQHQQQHQRRVGGQQQL) and 1453 to 1478 (GGSVSSRSQQQQLQKQQKQQQQQQQR). Composition is skewed to acidic residues over residues 1486–1500 (DDDDDDDEEEDDEAT) and 1510–1523 (CDDDDEEEDSDLDD). Positions 1524-1536 (DAHKLPPQSDERM) are enriched in basic and acidic residues. Low complexity predominate over residues 1565 to 1580 (GALPPGVAPGAGSAGP). Residues 1644-1659 (QTPAQKRQQLQKLSPQ) show a composition bias toward polar residues. Positions 1660–1675 (STTSSSSHTSHSNLQP) are enriched in low complexity. The segment covering 1679 to 1693 (PLTHQHPHPPQHQQR) has biased composition (basic residues).

The protein belongs to the G-protein coupled receptor 2 family. LN-TM7 subfamily. In terms of assembly, forms a heterodimer, consisting of a large extracellular region non-covalently linked to a seven-transmembrane moiety. Post-translationally, proteolytically cleaved into 2 subunits, an extracellular subunit and a seven-transmembrane subunit.

It localises to the cell membrane. The protein is Latrophilin Cirl of Drosophila ananassae (Fruit fly).